The sequence spans 160 residues: MMERFEKIEMKIPAKAEYVAIIRLTMAGVANRMGFAYDDIEDMKIAISEACTNIVQHAYKEDVGEITIVFGLYEDRLEIMVADNGVSFDFNNLKRKVGPYDINKPVEHLPENGLGLYLINTLMDDIQIMHDEGMTVLMTKYIQREQVENDGNPISTYNSY.

This sequence belongs to the anti-sigma-factor family.

The enzyme catalyses L-seryl-[protein] + ATP = O-phospho-L-seryl-[protein] + ADP + H(+). It catalyses the reaction L-threonyl-[protein] + ATP = O-phospho-L-threonyl-[protein] + ADP + H(+). Its function is as follows. Negative regulator of sigma-B activity. Phosphorylates and inactivates its specific antagonist protein, RsbV. Upon phosphorylation of RsbV, RsbW is released and binds to sigma-B, thereby blocking its ability to form an RNA polymerase holoenzyme (E-sigma-B). The sequence is that of Serine-protein kinase RsbW from Bacillus cereus (strain ATCC 10987 / NRS 248).